A 188-amino-acid chain; its full sequence is CXXC-type zinc finger protein 4 (188 aa).

The tract at residues 1 to 20 (MHRNDSQRLGKPGGAPESLQ) is disordered. The segment at 122–163 (AKKKRKRCGVCVPCKRLINCGVCSSCRNRKTGHQICKFRKCE) adopts a CXXC-type zinc-finger fold. Zn(2+) contacts are provided by cysteine 129, cysteine 132, cysteine 135, cysteine 141, cysteine 144, cysteine 147, cysteine 157, and cysteine 162.

The protein resides in the cytoplasm. Functionally, acts as a negative regulator of the Wnt signaling pathway required for anterior neural structure formation. Binds preferentially to DNA containing cytidine-phosphate-guanosine (CpG) dinucleotides over CpH (H=A, T, and C), hemimethylated-CpG and hemimethylated-hydroxymethyl-CpG. This chain is CXXC-type zinc finger protein 4 (cxxc4), found in Xenopus tropicalis (Western clawed frog).